A 382-amino-acid chain; its full sequence is Required for respiratory growth protein 1, mitochondrial (382 aa).

This sequence belongs to the RRG1 family.

It is found in the mitochondrion. Its function is as follows. Essential for respiratory growth and required for mitochondrial protein synthesis. Required for vacuolar acidification. The chain is Required for respiratory growth protein 1, mitochondrial (RRG1) from Vanderwaltozyma polyspora (strain ATCC 22028 / DSM 70294 / BCRC 21397 / CBS 2163 / NBRC 10782 / NRRL Y-8283 / UCD 57-17) (Kluyveromyces polysporus).